The sequence spans 146 residues: Cyanate hydratase (146 aa).

Catalysis depends on residues arginine 87, glutamate 90, and serine 113.

The protein belongs to the cyanase family.

The enzyme catalyses cyanate + hydrogencarbonate + 3 H(+) = NH4(+) + 2 CO2. In terms of biological role, catalyzes the reaction of cyanate with bicarbonate to produce ammonia and carbon dioxide. The polypeptide is Cyanate hydratase (Trichormus variabilis (strain ATCC 29413 / PCC 7937) (Anabaena variabilis)).